Reading from the N-terminus, the 144-residue chain is Galectin b (144 aa).

Residues 1–138 (DHIDLEFDVG…DAVLRKLCVV (138 aa)) enclose the Galectin domain.

In terms of biological role, lectin that binds beta-galactoside and a wide array of complex carbohydrates. In Aplysina lactuca (Marine sponge), this protein is Galectin b.